Reading from the N-terminus, the 289-residue chain is MNTPQNSPLGQATAYLDQYDASLLFPIARATKRAEIGVTGALPFLGADMWTAFELSWLNLRGKPQVALARFTVPCESPNIIESKSFKLYLNSFNNTRFADVDAVKARLRADLSEAVWRDAGKNVSPDAAAPPSIGVTLLLPELFDREPIYELDGLSLDRLDVECTHYTPAPDLLRVVPDEAPVSEVLVSNLLKSNCPVTGQPDWASVQISYSGAPIDQEGLLQYLVSFRNHNEFHEQCVERIFMDLWTRCKPVRLAVYARYTRRGGLDINPFRTSYAQALPANVRNARQ.

81-83 (IES) contributes to the substrate binding site. 83–84 (SK) is a binding site for NADPH. Cys196 functions as the Thioimide intermediate in the catalytic mechanism. Asp203 serves as the catalytic Proton donor. 235–236 (HE) is a substrate binding site. 264 to 265 (RG) is a binding site for NADPH.

This sequence belongs to the GTP cyclohydrolase I family. QueF type 2 subfamily. As to quaternary structure, homodimer.

It localises to the cytoplasm. It carries out the reaction 7-aminomethyl-7-carbaguanine + 2 NADP(+) = 7-cyano-7-deazaguanine + 2 NADPH + 3 H(+). It participates in tRNA modification; tRNA-queuosine biosynthesis. In terms of biological role, catalyzes the NADPH-dependent reduction of 7-cyano-7-deazaguanine (preQ0) to 7-aminomethyl-7-deazaguanine (preQ1). This chain is NADPH-dependent 7-cyano-7-deazaguanine reductase, found in Albidiferax ferrireducens (strain ATCC BAA-621 / DSM 15236 / T118) (Rhodoferax ferrireducens).